Consider the following 531-residue polypeptide: Zinc finger protein 692 (531 aa).

Residues 155 to 178 show a composition bias toward basic and acidic residues; it reads EAQGLECEQRERTQETRLSRRVDS. Disordered regions lie at residues 155-249 and 287-307; these read EAQG…PATL and MTES…PTWD. Acidic residues predominate over residues 186-206; sequence LGEDQDVEEEEEEEEEEEELL. Position 231 is a phosphoserine (Ser-231). Residues 290–303 are compositionally biased toward polar residues; the sequence is SLESPGSQAQSAPN. C2H2-type zinc fingers lie at residues 327-352, 358-382, 388-410, 416-438, and 447-470; these read MPCD…KYQH, FCCP…VKLH, YICE…RRIH, LQCE…RRKH, and FPCE…SKSH. Ser-469 carries the phosphoserine modification. A disordered region spans residues 474 to 531; that stretch reads LPAQEPPGSLVSSPSISAPESLQSPEGASISTTSDSNPASSTSISSPGVPDPRNREKS. The span at 483–499 shows a compositional bias: polar residues; it reads LVSSPSISAPESLQSPE. Over residues 502–520 the composition is skewed to low complexity; it reads SISTTSDSNPASSTSISSP.

This sequence belongs to the krueppel C2H2-type zinc-finger protein family. In terms of processing, phosphorylation at Ser-469 results in loss of DNA-binding activity.

The protein resides in the nucleus. In terms of biological role, may act as an transcriptional repressor for PCK1 gene expression, in turn may participate in the hepatic gluconeogenesis regulation through the activated AMPK signaling pathway. In Mus musculus (Mouse), this protein is Zinc finger protein 692.